The following is a 261-amino-acid chain: HTH-type transcriptional repressor CsqR (261 aa).

In terms of domain architecture, HTH deoR-type spans G8–R63. A DNA-binding region (H-T-H motif) is located at residues M25 to D44.

As to quaternary structure, monomer in the absence of DNA. Exhibits a high level of cooperativity once it is bound to its target DNA.

Inactivated in the presence of the effectors sulfoquinovose and sulfoquinovosyl glycerol, leading to the de-repression of the target genes. Functionally, involved in the regulation of the sulfoquinovose operon. Represses the expression of the yihUTS operon and of the yihV and csqR genes. Binds DNA inside the spacer between the bidirectional transcription units comprising the yihUTS operon and the yihV gene, and upstream the csqR gene itself. The chain is HTH-type transcriptional repressor CsqR from Escherichia coli (strain K12).